Here is a 323-residue protein sequence, read N- to C-terminus: tRNA U34 carboxymethyltransferase (323 aa).

Residues K91, W105, K110, G130, 152–154 (DPT), 181–182 (IE), M196, Y200, and R315 contribute to the carboxy-S-adenosyl-L-methionine site.

This sequence belongs to the class I-like SAM-binding methyltransferase superfamily. CmoB family. In terms of assembly, homotetramer.

The catalysed reaction is carboxy-S-adenosyl-L-methionine + 5-hydroxyuridine(34) in tRNA = 5-carboxymethoxyuridine(34) in tRNA + S-adenosyl-L-homocysteine + H(+). Its function is as follows. Catalyzes carboxymethyl transfer from carboxy-S-adenosyl-L-methionine (Cx-SAM) to 5-hydroxyuridine (ho5U) to form 5-carboxymethoxyuridine (cmo5U) at position 34 in tRNAs. The chain is tRNA U34 carboxymethyltransferase from Salmonella arizonae (strain ATCC BAA-731 / CDC346-86 / RSK2980).